The primary structure comprises 36 residues: Ostricacin-1 (36 aa).

Disulfide bonds link Cys3/Cys29, Cys8/Cys23, and Cys13/Cys30.

Its subcellular location is the secreted. Has antibacterial activity against the Gram-positive bacteria S.aureus 1056 MRSA (MIC=1.25 ug/ml) and S.aureus NCTC 4163 (MIC=6.7 ug/ml), and the Gram-negative bacteria E.coli O157:H7 (MIC=0.96 ug/ml) and E.coli 0111 (MIC=6.7 ug/ml). Does not have antifungal activity against the yeast C.albicans 3153A. In Struthio camelus (Common ostrich), this protein is Ostricacin-1.